Here is a 339-residue protein sequence, read N- to C-terminus: NADH-quinone oxidoreductase subunit H (339 aa).

Transmembrane regions (helical) follow at residues 9–29, 50–70, 82–102, 115–135, 161–181, 187–207, 235–255, 275–295, and 311–331; these read IFPL…LILC, PNVV…KLLF, ILFI…WAVI, VGVL…IIAG, MGLV…SGII, MPWW…ISVL, MGFA…SAMT, IPGF…FLWI, and GWKV…SVLV.

This sequence belongs to the complex I subunit 1 family. In terms of assembly, NDH-1 is composed of 14 different subunits. Subunits NuoA, H, J, K, L, M, N constitute the membrane sector of the complex.

Its subcellular location is the cell inner membrane. The catalysed reaction is a quinone + NADH + 5 H(+)(in) = a quinol + NAD(+) + 4 H(+)(out). Its function is as follows. NDH-1 shuttles electrons from NADH, via FMN and iron-sulfur (Fe-S) centers, to quinones in the respiratory chain. The immediate electron acceptor for the enzyme in this species is believed to be ubiquinone. Couples the redox reaction to proton translocation (for every two electrons transferred, four hydrogen ions are translocated across the cytoplasmic membrane), and thus conserves the redox energy in a proton gradient. This subunit may bind ubiquinone. The chain is NADH-quinone oxidoreductase subunit H from Rickettsia felis (strain ATCC VR-1525 / URRWXCal2) (Rickettsia azadi).